Consider the following 292-residue polypeptide: MSMPATSTKTTKLATSLIDEYALLGWRAMLTEVNLSPKPGLVDRINCGAHKDMALEDFHRSALAIQGWLPRFIEFGACSAEMAPEAVLHGLRPIGMACEGDMFRATAGVNTHKGSIFSLGLLCAAIGRLLQLNQPVTPTTVCSTAASFCRGLTDRELRTNNSRLTAGQRLYQQLGLTGARGEAEAGYPLVINHALPHYLTLLDQGLDPELALLDTLLLLMATNGDTNVASRGGEGGLRWLQREAQTLLQKGGIRTPTDLDYLRQFDRECIERNLSPGGSADLLILTCFLAQI.

Belongs to the CitG/MdcB family.

It catalyses the reaction 3'-dephospho-CoA + ATP = 2'-(5''-triphospho-alpha-D-ribosyl)-3'-dephospho-CoA + adenine. This chain is Probable 2-(5''-triphosphoribosyl)-3'-dephosphocoenzyme-A synthase, found in Shigella flexneri.